Here is a 525-residue protein sequence, read N- to C-terminus: BTB/POZ domain-containing protein At1g50280 (525 aa).

Residues 5–79 (NDLKINLNGQ…CYHNGEILID (75 aa)) form the BTB domain. The region spanning 200 to 466 (EWWFEDMTNL…IEALKSRCGN (267 aa)) is the NPH3 domain.

This sequence belongs to the NPH3 family.

It functions in the pathway protein modification; protein ubiquitination. In terms of biological role, may act as a substrate-specific adapter of an E3 ubiquitin-protein ligase complex (CUL3-RBX1-BTB) which mediates the ubiquitination and subsequent proteasomal degradation of target proteins. The sequence is that of BTB/POZ domain-containing protein At1g50280 from Arabidopsis thaliana (Mouse-ear cress).